The sequence spans 185 residues: Nuclear transcription factor Y subunit B-3 (185 aa).

Residues 1–36 (MADGPGSPGGGGGSHESGSPRGGGGGGGGGGGGGGV) are compositionally biased toward gly residues. Residues 1-39 (MADGPGSPGGGGGSHESGSPRGGGGGGGGGGGGGGVREQ) are disordered. The DNA-binding element occupies 43–49 (LPIANIS). Residues 70 to 81 (VQECVSEFISFI) are subunit association domain (SAD). The tract at residues 145–164 (KDVLGSHGGSSSSAQGMGQQ) is disordered. Residues 153-164 (GSSSSAQGMGQQ) show a composition bias toward low complexity.

The protein belongs to the NFYB/HAP3 subunit family. Heterotrimeric transcription factor composed of three components, NF-YA, NF-YB and NF-YC. NF-YB and NF-YC must interact and dimerize for NF-YA association and DNA binding. As to expression, ubiquitous.

It localises to the nucleus. Functionally, component of the NF-Y/HAP transcription factor complex. The NF-Y complex stimulates the transcription of various genes by recognizing and binding to a CCAAT motif in promoters. May regulate the expression of photosynthetic genes, and may be involved in chloroplast and amyloplast development. The protein is Nuclear transcription factor Y subunit B-3 (NFYB3) of Oryza sativa subsp. japonica (Rice).